Consider the following 174-residue polypeptide: Ribosome maturation factor RimM (174 aa).

The 74-residue stretch at glutamate 98–leucine 171 folds into the PRC barrel domain.

It belongs to the RimM family. As to quaternary structure, binds ribosomal protein uS19.

Its subcellular location is the cytoplasm. Its function is as follows. An accessory protein needed during the final step in the assembly of 30S ribosomal subunit, possibly for assembly of the head region. Essential for efficient processing of 16S rRNA. May be needed both before and after RbfA during the maturation of 16S rRNA. It has affinity for free ribosomal 30S subunits but not for 70S ribosomes. The sequence is that of Ribosome maturation factor RimM from Bacillus licheniformis (strain ATCC 14580 / DSM 13 / JCM 2505 / CCUG 7422 / NBRC 12200 / NCIMB 9375 / NCTC 10341 / NRRL NRS-1264 / Gibson 46).